A 489-amino-acid polypeptide reads, in one-letter code: F-box/LRR-repeat protein 7 (489 aa).

A compositionally biased stretch (low complexity) spans 1–31 (MGANNGKQSGSEGKGSSSISSDLSSSTDQTS). The disordered stretch occupies residues 1–76 (MGANNGKQSG…AVLNGSSTSS (76 aa)). Polar residues predominate over residues 32 to 55 (TKAPKNAATSEDSDLSMRTVSTPS). Residues 64–76 (SSSAVLNGSSTSS) show a composition bias toward low complexity. In terms of domain architecture, F-box spans 109–155 (GAPVDILPDHAFLQIFTHLPTNQLCRCARVCRRWYNLAWDPRLWRTI). 11 LRR repeats span residues 168-193 (LRVL…MVSG), 194-219 (CRRL…EVAG), 220-245 (CYNV…DVSG), 251-279 (CISL…DMTD), 280-305 (CFAL…YLRR), 306-331 (CVRL…SVSD), 332-357 (CRFI…SIAH), 358-383 (CSRI…NARG), 384-409 (CEGL…DIGK), 410-435 (CPLV…SLKS), and 436-461 (CESI…NVQD).

Belongs to the FBXL7 family. As to quaternary structure, part of the SCF (SKP1-CUL1-F-box) E3 ubiquitin-protein ligase complex SCF(FBXL7).

It is found in the cytoplasm. Its subcellular location is the cytoskeleton. The protein localises to the microtubule organizing center. The protein resides in the centrosome. It participates in protein modification; protein ubiquitination. Substrate recognition component of a SCF (SKP1-CUL1-F-box protein) E3 ubiquitin-protein ligase complex which mediates the ubiquitination and subsequent proteasomal degradation of target proteins. The protein is F-box/LRR-repeat protein 7 (fbxl7) of Danio rerio (Zebrafish).